Reading from the N-terminus, the 291-residue chain is GTPase Era (291 aa).

Residues 2–167 enclose the Era-type G domain; it reads KSGFVSIIGR…LDEIVKYLDE (166 aa). Residues 10-17 are G1; it reads GRTNAGKS. GTP is bound at residue 10–17; that stretch reads GRTNAGKS. Positions 36 to 40 are G2; that stretch reads NATRR. The interval 57 to 60 is G3; it reads DTPG. Residues 57-61 and 116-119 each bind GTP; these read DTPGL and NKVD. Residues 116–119 are G4; that stretch reads NKVD. Positions 146–148 are G5; that stretch reads YSS. In terms of domain architecture, KH type-2 spans 186-274; that stretch reads YRDFILESIY…LLKLFVTVKK (89 aa).

It belongs to the TRAFAC class TrmE-Era-EngA-EngB-Septin-like GTPase superfamily. Era GTPase family. Monomer.

Its subcellular location is the cytoplasm. The protein resides in the cell inner membrane. Functionally, an essential GTPase that binds both GDP and GTP, with rapid nucleotide exchange. Plays a role in 16S rRNA processing and 30S ribosomal subunit biogenesis and possibly also in cell cycle regulation and energy metabolism. This is GTPase Era from Campylobacter jejuni subsp. jejuni serotype O:23/36 (strain 81-176).